The chain runs to 948 residues: Sensor histidine kinase RcsC (948 aa).

Residues 1 to 20 (MKYLASFRTTLKVSRYLFRA) are Cytoplasmic-facing. A helical membrane pass occupies residues 21-41 (LALLIWLLIAFVSVFYIVNAL). Over 42–313 (HQRESEIRQE…PVDLVLERIR (272 aa)) the chain is Periplasmic. Residues 314–334 (ILILNAILLNVLVGAGLFTLA) form a helical membrane-spanning segment. The Cytoplasmic portion of the chain corresponds to 335–948 (RMYERRIFIP…YAERVRKTRA (614 aa)). The PAS domain maps to 357–425 (QFNRKIVASA…VLTSNNTNLQ (69 aa)). The Histidine kinase domain maps to 476-692 (TVSHELRTPL…QFTLRIPLYG (217 aa)). His-479 is subject to Phosphohistidine; by autocatalysis. The 101-residue stretch at 705-805 (AGTCCWLAVR…ARIYSIELDS (101 aa)) folds into the ABL domain. The 115-residue stretch at 826 to 940 (MILVVDDHPI…VLKQTLAVYA (115 aa)) folds into the Response regulatory domain. The residue at position 875 (Asp-875) is a 4-aspartylphosphate.

It belongs to the RcsC family. Interacts with RcsD. Post-translationally, autophosphorylated. Activation probably requires a transfer of a phosphate group from a His in the transmitter domain to an Asp in the receiver domain.

It is found in the cell inner membrane. The catalysed reaction is ATP + protein L-histidine = ADP + protein N-phospho-L-histidine.. In terms of biological role, component of the Rcs signaling system, which controls transcription of numerous genes. RcsC functions as a membrane-associated protein kinase that phosphorylates RcsD in response to environmental signals. The phosphoryl group is then transferred to the response regulator RcsB. This chain is Sensor histidine kinase RcsC, found in Salmonella typhimurium (strain LT2 / SGSC1412 / ATCC 700720).